The following is a 103-amino-acid chain: ATP synthase subunit c (103 aa).

The next 3 membrane-spanning stretches (helical) occupy residues 3-23 (FLAL…VSGL), 30-50 (SIAG…IGMG), and 74-94 (MFIA…LALI).

Belongs to the ATPase C chain family. F-type ATPases have 2 components, F(1) - the catalytic core - and F(0) - the membrane proton channel. F(1) has five subunits: alpha(3), beta(3), gamma(1), delta(1), epsilon(1). F(0) has three main subunits: a(1), b(2) and c(10-14). The alpha and beta chains form an alternating ring which encloses part of the gamma chain. F(1) is attached to F(0) by a central stalk formed by the gamma and epsilon chains, while a peripheral stalk is formed by the delta and b chains.

The protein resides in the cell inner membrane. F(1)F(0) ATP synthase produces ATP from ADP in the presence of a proton or sodium gradient. F-type ATPases consist of two structural domains, F(1) containing the extramembraneous catalytic core and F(0) containing the membrane proton channel, linked together by a central stalk and a peripheral stalk. During catalysis, ATP synthesis in the catalytic domain of F(1) is coupled via a rotary mechanism of the central stalk subunits to proton translocation. Its function is as follows. Key component of the F(0) channel; it plays a direct role in translocation across the membrane. A homomeric c-ring of between 10-14 subunits forms the central stalk rotor element with the F(1) delta and epsilon subunits. This Helicobacter hepaticus (strain ATCC 51449 / 3B1) protein is ATP synthase subunit c.